A 171-amino-acid chain; its full sequence is uncharacterized protein (171 aa).

Disordered stretches follow at residues 1–41 (MDAV…SKPK) and 114–147 (DSLGNTASSSSMDPAKGVPSQSGPPEGLGLRPKR). Positions 27-38 (AQQQQGPSAQGS) are enriched in low complexity. A compositionally biased stretch (polar residues) spans 116-125 (LGNTASSSSM).

This is an uncharacterized protein from Mus musculus (Mouse).